The sequence spans 150 residues: Macrodomain Ter protein (150 aa).

It belongs to the MatP family. As to quaternary structure, homodimer.

It is found in the cytoplasm. Its function is as follows. Required for spatial organization of the terminus region of the chromosome (Ter macrodomain) during the cell cycle. Prevents early segregation of duplicated Ter macrodomains during cell division. Binds specifically to matS, which is a 13 bp signature motif repeated within the Ter macrodomain. This chain is Macrodomain Ter protein, found in Shigella dysenteriae serotype 1 (strain Sd197).